Here is a 2497-residue protein sequence, read N- to C-terminus: MMLNKIKRSKAGSIEDSKLQALPLGTRRKIGQTTGESDNNNNNSNDQSLKKFKNDNTEENNSIGVNNNTSTNININTNTNINTNNSTNTNNINNTNNNNNNNNNNNNNNNNNNNNNNNNSNNNNNNNISNGGNNINNNNNNNNNGNNNNNINNSNGIRRVFDQNYYIDLVESEEDIEIKIRIIKSMLMVLKSSVGNEPDKCAFISLLVICKRSPTLFSHFDLLEPLLSLLKKDPTHVQKKNNLLSILACNLLMAGYDHIQDWPVYLFCAYLDDAIGDRYWVEDQYCKTFVNNIITAFPQQPQPPQQQQTKQPVNIKTQPQQQQQQQQQPQPQQIKKSDDDIVEEIDNLLSVSSSSQPQPQQQKNRFSHCLNDIIKYIIHMIRQYIQSPNQRVFIKLLSLTVGFKESRLEGSQIIEQLLGNTNVFRFAKEYLTQLLAATTESTVEDIKTVQNLLKIQVSHHIDIISTLLVNNPIYPAIALHQAIEIELDTNQKVATKSKLSIIFKFLPNNRGEEELAMILKDFCSRDDSIRSPVKIIVKKILKNLTFISLFYLCEQLSTITQKDEQFYLLLQSSQQQQQQQPPPSTITITRERWALNIIHMLTQILFLIPSMNEHLKDQSNMRSMISTIQSSSVSWCFKLLNLGVLSYGDALSLIGKVLIFEPLNSFFQAPNLAVDSDRNAYRMLTTEIPIQENILDILLTIGFEYPSEKKIVLELCEALLKRAISIVHKFNVLVPLTKVTFAESILSLSRIENTSEPQLAYTSLFWQSTILACLLICLSPSIIGSYYWNNCPTIRILIEMIITRSWKFPPYLPKAVANNPSYFQLIEQNQRIEEKKLLSRIPQLTSIDFMILDSIKGTNGVIRQPPEEIIEKLQKLDNDFHLGFILCNCRSPDFLLDIMSNQDSKQSMMWLNPIIHNDPKTLDILPPICLSEILLSTQFEQQQQQQQQQQQLQTPQQQQQQQQPTNPIAPRVLNRMSLFFNSPSPVPTLEILNFFFTLLCSDNPIIRILSKKSLSLLVLPIKSTLSTTTTTTSSTTTTTTTTTSTTTSTSTSSSSSSLNPTQPSLRSSCDKIKTSGLSGSSNGINQSSDSITAVAGSTSPTTTTTSSSSTCQTYITEEFQWLLKLNNLAWFEESQEIVISALKKAINVETDVSSIRSYIQYLVVNQSTPFDASFQMDLSQLILNRGIIANYLLSSDISILIFNAYLNILEPLNQKDLSKKLLLLSSSTNSINNINNNDNNNNNNNNNNNNNNNNNNNNNDNNINKNNDDNNHSNSMANNNLPNNNNKNNQKSKKWVKIIKNSNNKNNDDNSMEDDNNEDIIYLPRIVLDSIIYCISSSLNVNDIDQIQSIVAILFPTTTTTAIDQDKTFEIKNKFLDFDNQTDEEPILKSKQLVEVSLKSSIPQLISIALQRNTSVGLFNGLNDYIEQLILKGIEMSFLSRSMILEIIDKNIDKIKSSFENNSSNNDNNESKEIKEILNQIIENNEKQTILKLFIKESSKHGQLFLNFIESLISAKSGDSKQITKKKQKSSFNLFNEFLETDEINNQEIEEGSMELDINFENSIKHQILNINNNNNNNNNNNNNNNNNNNNNNNNNNNNNNNITQLLEGNGQIDSFVKAINSFEVSKSISSDININIPFSISTIRILKNTTQQKQQKQQQKESVQKSIQSLSKLILSSKNIKNYQKRFIDHILKKKSNLELIESAQNLTLENGINKEFDICKEWEIYSSGSGSSSNEINDQFKGTEIIRKLVNKQHFSIIIVSDPLKLGEIFKSLVKQFILNDQLRLEEFIGGFFTKVYSNSLSQSSTITIVLFNSLVSLLTDFGSNIQMKQSLGILLDWTGLLVQQFLLKNNNNNNNNNNNGISLNIKQFYFLLFGKGSFKFSTLLHSHFIHNSTWRNLKIMMQWLFKVNNNYNDDDDDNDDGDRPIIDATLVLNFINAYHQHPRSGAPYYSASNTATTASSKSITNMSTIMDSMVMHYLNPSTIRTLSDYIIEEIDQVKGGPSNYPQSKLRNRMNLLISSSMISKENLISLVLHLSNQYTKSTSSSIVIKQIYFAFPSTLKSILTNFSPCLIVSSPNNLLSQQQQQQQQQQQQQQKQQSNNSNNINNNNNNNNSEKKQKSKEQNIILTTNDLIVNNQSIPSTQLDIILHRVILKISDMSTIENRNSGFIIVRKLAILHPELITLHLPSFYSLLSGRADTPLTLFLSRNYHHLFYQILDLLDILRPIVFNSQSLLPILQEYFTLFSNNCNQRINDFIPIVSKLCDFLLPFTGNYQNLDILIQNKDTIKSLSIFYPNAEPLLLRIKPNQISSLSSSYYLSSLLSINNNNNNNNNNNNNNNNNNNNNNNNNNNPLELIKFKLYDNGYNNNNNDKLVKQLEDVIKITQNLPSYLHCIKDELLRLIQSDYQNIRAISYFLIQRYLQYCPQDAESMMDKYLSCFQHWNPDVVKDAIQHSSDFYCLSNDRSEYLIEQILIYGGKDSINDIKKLINPFSRIFY.

A compositionally biased stretch (basic residues) spans M1 to K10. Disordered regions lie at residues M1–I151, Q300–S337, Q946–T965, T1028–S1108, I1234–S1292, and N1572–T1604. Composition is skewed to low complexity over residues S37–D46, N60–I151, Q305–Q333, Q946–Q963, and T1028–L1058. Residues S1075–I1091 show a composition bias toward polar residues. Composition is skewed to low complexity over residues S1097–S1108, I1234–K1265, H1272–N1289, and N1572–N1602. Residues R1645–I1675 are a coiled coil. Positions Q2084–N2115 are enriched in low complexity. 2 disordered regions span residues Q2084–K2123 and N2329–N2350.

This sequence belongs to the Integrator subunit 1 family. Component of the Integrator complex. The core complex associates with protein phosphatase 2A subunits to form the Integrator-PP2A (INTAC) complex.

Its subcellular location is the nucleus. Its function is as follows. Component of the integrator complex, a multiprotein complex that terminates RNA polymerase II (Pol II) transcription in the promoter-proximal region of genes. The integrator complex provides a quality checkpoint during transcription elongation by driving premature transcription termination of transcripts that are unfavorably configured for transcriptional elongation: the complex terminates transcription by (1) catalyzing dephosphorylation of the C-terminal domain (CTD) of Pol II subunit polr2a, (2) degrading the exiting nascent RNA transcript via endonuclease activity and (3) promoting the release of Pol II from bound DNA. The integrator complex is also involved in terminating the synthesis of non-coding Pol II transcripts, such as enhancer RNAs (eRNAs), small nuclear RNAs (snRNAs), telomerase RNAs and long non-coding RNAs (lncRNAs). This chain is Integrator complex subunit 1 homolog (ints1), found in Dictyostelium discoideum (Social amoeba).